The following is a 65-amino-acid chain: Large ribosomal subunit protein bL35 (65 aa).

Residues 1 to 22 (MPKMKTKSSAKKRFKVTGSGKI) are disordered.

The protein belongs to the bacterial ribosomal protein bL35 family.

The chain is Large ribosomal subunit protein bL35 from Flavobacterium johnsoniae (strain ATCC 17061 / DSM 2064 / JCM 8514 / BCRC 14874 / CCUG 350202 / NBRC 14942 / NCIMB 11054 / UW101) (Cytophaga johnsonae).